The primary structure comprises 705 residues: uncharacterized protein (705 aa).

This is an uncharacterized protein from Acanthamoeba polyphaga (Amoeba).